A 254-amino-acid polypeptide reads, in one-letter code: Phosphoribosylaminoimidazole-succinocarboxamide synthase (254 aa).

This sequence belongs to the SAICAR synthetase family.

It catalyses the reaction 5-amino-1-(5-phospho-D-ribosyl)imidazole-4-carboxylate + L-aspartate + ATP = (2S)-2-[5-amino-1-(5-phospho-beta-D-ribosyl)imidazole-4-carboxamido]succinate + ADP + phosphate + 2 H(+). Its pathway is purine metabolism; IMP biosynthesis via de novo pathway; 5-amino-1-(5-phospho-D-ribosyl)imidazole-4-carboxamide from 5-amino-1-(5-phospho-D-ribosyl)imidazole-4-carboxylate: step 1/2. The chain is Phosphoribosylaminoimidazole-succinocarboxamide synthase from Gluconobacter oxydans (strain 621H) (Gluconobacter suboxydans).